We begin with the raw amino-acid sequence, 815 residues long: Phosphatidylinositol 4-phosphate 5-kinase 9 (815 aa).

8 MORN repeats span residues 58–80, 81–103, 104–126, 127–149, 150–172, 173–195, 196–218, and 219–240; these read YSGS…DGCV, YDGE…SGAS, YDGE…NKLT, YKGR…NGDV, FEGS…NKNV, YLGD…TGDS, YEGS…DGGC, and YVGT…AGTR. The PIPK domain occupies 391 to 809; the sequence is GHRSYDLMLS…RFLEFIKKVF (419 aa). Positions 769 to 790 are activation loop; the sequence is YNMTKKIEHAYKSLHFDSLSIS.

In terms of assembly, interacts with CINV1. Widely expressed.

The protein localises to the membrane. Its subcellular location is the nucleus. It catalyses the reaction a 1,2-diacyl-sn-glycero-3-phospho-(1D-myo-inositol 4-phosphate) + ATP = a 1,2-diacyl-sn-glycero-3-phospho-(1D-myo-inositol-4,5-bisphosphate) + ADP + H(+). Its function is as follows. Plays a role in sugar-mediated root development. Interaction with CINV1 induces repression of CINV1 activity and negative regulation of sugar-mediated root cell elongation. The protein is Phosphatidylinositol 4-phosphate 5-kinase 9 (PIP5K9) of Arabidopsis thaliana (Mouse-ear cress).